Reading from the N-terminus, the 345-residue chain is Holliday junction branch migration complex subunit RuvB (345 aa).

A large ATPase domain (RuvB-L) region spans residues Leu4–Tyr185. ATP-binding positions include Leu24, Arg25, Gly66, Lys69, Thr70, Thr71, Glu132 to Tyr134, Arg175, Tyr185, and Arg222. Mg(2+) is bound at residue Thr70. A small ATPAse domain (RuvB-S) region spans residues Asn186 to Glu256. The tract at residues Lys259–Ile345 is head domain (RuvB-H). 2 residues coordinate DNA: Arg314 and Arg319.

This sequence belongs to the RuvB family. In terms of assembly, homohexamer. Forms an RuvA(8)-RuvB(12)-Holliday junction (HJ) complex. HJ DNA is sandwiched between 2 RuvA tetramers; dsDNA enters through RuvA and exits via RuvB. An RuvB hexamer assembles on each DNA strand where it exits the tetramer. Each RuvB hexamer is contacted by two RuvA subunits (via domain III) on 2 adjacent RuvB subunits; this complex drives branch migration. In the full resolvosome a probable DNA-RuvA(4)-RuvB(12)-RuvC(2) complex forms which resolves the HJ.

It localises to the cytoplasm. It carries out the reaction ATP + H2O = ADP + phosphate + H(+). The RuvA-RuvB-RuvC complex processes Holliday junction (HJ) DNA during genetic recombination and DNA repair, while the RuvA-RuvB complex plays an important role in the rescue of blocked DNA replication forks via replication fork reversal (RFR). RuvA specifically binds to HJ cruciform DNA, conferring on it an open structure. The RuvB hexamer acts as an ATP-dependent pump, pulling dsDNA into and through the RuvAB complex. RuvB forms 2 homohexamers on either side of HJ DNA bound by 1 or 2 RuvA tetramers; 4 subunits per hexamer contact DNA at a time. Coordinated motions by a converter formed by DNA-disengaged RuvB subunits stimulates ATP hydrolysis and nucleotide exchange. Immobilization of the converter enables RuvB to convert the ATP-contained energy into a lever motion, pulling 2 nucleotides of DNA out of the RuvA tetramer per ATP hydrolyzed, thus driving DNA branch migration. The RuvB motors rotate together with the DNA substrate, which together with the progressing nucleotide cycle form the mechanistic basis for DNA recombination by continuous HJ branch migration. Branch migration allows RuvC to scan DNA until it finds its consensus sequence, where it cleaves and resolves cruciform DNA. In Clostridium tetani (strain Massachusetts / E88), this protein is Holliday junction branch migration complex subunit RuvB.